A 327-amino-acid polypeptide reads, in one-letter code: L-lactate dehydrogenase (327 aa).

NAD(+) contacts are provided by residues V18, D39, R44, Y69, and 83–84; that span reads GL. Substrate is bound by residues Q86, R92, and 124 to 127; that span reads NPVD. Residues 122 to 124 and S147 contribute to the NAD(+) site; that span reads AAN. 152–155 contributes to the substrate binding site; it reads DSAR. Residues R157 and H172 each contribute to the beta-D-fructose 1,6-bisphosphate site. Residue H179 is the Proton acceptor of the active site. At Y224 the chain carries Phosphotyrosine. Residue T233 participates in substrate binding.

Belongs to the LDH/MDH superfamily. LDH family. As to quaternary structure, homotetramer.

The protein resides in the cytoplasm. It catalyses the reaction (S)-lactate + NAD(+) = pyruvate + NADH + H(+). The protein operates within fermentation; pyruvate fermentation to lactate; (S)-lactate from pyruvate: step 1/1. Allosterically activated by fructose 1,6-bisphosphate (FBP). Its function is as follows. Catalyzes the conversion of lactate to pyruvate. The chain is L-lactate dehydrogenase from Streptococcus suis (strain 98HAH33).